The following is a 225-amino-acid chain: Cytidylate kinase (225 aa).

11-19 is an ATP binding site; that stretch reads GPAAAGKST.

Belongs to the cytidylate kinase family. Type 1 subfamily.

The protein resides in the cytoplasm. It carries out the reaction CMP + ATP = CDP + ADP. It catalyses the reaction dCMP + ATP = dCDP + ADP. In Bacillus anthracis (strain A0248), this protein is Cytidylate kinase.